A 726-amino-acid polypeptide reads, in one-letter code: Dipeptidyl-peptidase 5 (726 aa).

The first 19 residues, 1–19, serve as a signal peptide directing secretion; it reads MAAAKWLIASLAFASSGLA. Residues asparagine 96 and asparagine 252 are each glycosylated (N-linked (GlcNAc...) asparagine). The segment at 269–291 is disordered; the sequence is AEPINKRNGPRTPQGIEGASSSP. Residue serine 558 is the Charge relay system of the active site. Asparagine 605 carries an N-linked (GlcNAc...) asparagine glycan. Catalysis depends on charge relay system residues aspartate 641 and histidine 673. N-linked (GlcNAc...) asparagine glycosylation is present at asparagine 699.

The protein belongs to the peptidase S9C family.

It localises to the secreted. Functionally, extracellular dipeptidyl-peptidase which removes N-terminal dipeptides sequentially from polypeptides having unsubstituted N-termini. Contributes to pathogenicity. The sequence is that of Dipeptidyl-peptidase 5 (DPP5) from Trichophyton tonsurans (Scalp ringworm fungus).